A 338-amino-acid polypeptide reads, in one-letter code: Ketol-acid reductoisomerase (NADP(+)) (338 aa).

The KARI N-terminal Rossmann domain maps to 1-181 (MQVYYDKDCD…GGGRTGIIET (181 aa)). Residues 24-27 (YGSQ), arginine 47, serine 50, serine 52, and 82-85 (DEFQ) contribute to the NADP(+) site. Histidine 107 is an active-site residue. NADP(+) is bound at residue glycine 133. The KARI C-terminal knotted domain maps to 182-327 (TFKDETETDL…EKLRSMMPWI (146 aa)). Mg(2+)-binding residues include aspartate 190, glutamate 194, glutamate 226, and glutamate 230. Position 251 (serine 251) interacts with substrate.

This sequence belongs to the ketol-acid reductoisomerase family. The cofactor is Mg(2+).

The catalysed reaction is (2R)-2,3-dihydroxy-3-methylbutanoate + NADP(+) = (2S)-2-acetolactate + NADPH + H(+). The enzyme catalyses (2R,3R)-2,3-dihydroxy-3-methylpentanoate + NADP(+) = (S)-2-ethyl-2-hydroxy-3-oxobutanoate + NADPH + H(+). It functions in the pathway amino-acid biosynthesis; L-isoleucine biosynthesis; L-isoleucine from 2-oxobutanoate: step 2/4. It participates in amino-acid biosynthesis; L-valine biosynthesis; L-valine from pyruvate: step 2/4. Functionally, involved in the biosynthesis of branched-chain amino acids (BCAA). Catalyzes an alkyl-migration followed by a ketol-acid reduction of (S)-2-acetolactate (S2AL) to yield (R)-2,3-dihydroxy-isovalerate. In the isomerase reaction, S2AL is rearranged via a Mg-dependent methyl migration to produce 3-hydroxy-3-methyl-2-ketobutyrate (HMKB). In the reductase reaction, this 2-ketoacid undergoes a metal-dependent reduction by NADPH to yield (R)-2,3-dihydroxy-isovalerate. The sequence is that of Ketol-acid reductoisomerase (NADP(+)) from Hahella chejuensis (strain KCTC 2396).